The chain runs to 756 residues: Serine/threonine-protein kinase DCLK2 (756 aa).

The tract at residues 1-44 is disordered; the sequence is MASTRSIELEHFEERDKRPRPGSRRGAPSSSGGSSISGPKGNGL. Basic and acidic residues predominate over residues 7–19; it reads IELEHFEERDKRP. Low complexity predominate over residues 24-43; that stretch reads RRGAPSSSGGSSISGPKGNG. At Thr-61 the chain carries Phosphothreonine. Doublecortin domains lie at 72 to 158 and 196 to 279; these read KKAR…VDYT and KLVT…AQDD. Low complexity-rich tracts occupy residues 301 to 311 and 323 to 346; these read KYSGSRSPGFS and TPSS…SPGS. The segment at 301–375 is disordered; sequence KYSGSRSPGF…GPELDRCLSP (75 aa). Positions 353 to 364 are enriched in polar residues; the sequence is ISAQGRSSSNVN. Phosphoserine is present on Ser-361. The region spanning 393–650 is the Protein kinase domain; the sequence is YRIGKVIGDG…AGEILSHPWV (258 aa). ATP contacts are provided by residues 399–407 and Lys-422; that span reads IGDGNFAVV. Catalysis depends on Asp-514, which acts as the Proton acceptor. Phosphoserine is present on Ser-646. At Thr-665 the chain carries Phosphothreonine. The tract at residues 707 to 756 is disordered; sequence QDSSRPSREQTSPVPPSAQEAPPPLESPRPPGPPATSGCDLAGTWRRHRD. Over residues 719–740 the composition is skewed to pro residues; it reads PVPPSAQEAPPPLESPRPPGPP.

Belongs to the protein kinase superfamily. CAMK Ser/Thr protein kinase family. CaMK subfamily. In terms of assembly, binds to and stabilizes microtubules. Interacts with MAPK8IP1/JIP-1, MAPK8IP2/JIP-2, MAPK9/JNK2, PPP1R9B/NEURABIN-2 and actin. In terms of processing, autophosphorylated. In terms of tissue distribution, expressed in the central and peripheral nervous system including the brain, spinal cord, cranial and dorsal root ganglia and in the parasympathetic ganglia. Present in neurons, but not in glial cells, in most forebrain areas. Strong expression in the hippocampal CA1 pyramidal cell layer. Expressed in the photoreceptor sensory cilium complex and in eyes. Also detected in individual cells of the olfactory epithelium.

Its subcellular location is the cytoplasm. The protein resides in the cytoskeleton. The catalysed reaction is L-seryl-[protein] + ATP = O-phospho-L-seryl-[protein] + ADP + H(+). It carries out the reaction L-threonyl-[protein] + ATP = O-phospho-L-threonyl-[protein] + ADP + H(+). Functionally, protein kinase with a significantly reduced Ca(2+)+/CAM affinity and dependence compared to other members of the CaMK family. May play a role in the down-regulation of CRE-dependent gene activation probably by phosphorylation of the CREB coactivator CRTC2/TORC2 and the resulting retention of TORC2 in the cytoplasm. The protein is Serine/threonine-protein kinase DCLK2 (Dclk2) of Mus musculus (Mouse).